The chain runs to 301 residues: Bifunctional protein FolD (301 aa).

NADP(+) is bound by residues 169–171, Ser194, and Ile235; that span reads GRS.

Belongs to the tetrahydrofolate dehydrogenase/cyclohydrolase family. Homodimer.

It catalyses the reaction (6R)-5,10-methylene-5,6,7,8-tetrahydrofolate + NADP(+) = (6R)-5,10-methenyltetrahydrofolate + NADPH. It carries out the reaction (6R)-5,10-methenyltetrahydrofolate + H2O = (6R)-10-formyltetrahydrofolate + H(+). It functions in the pathway one-carbon metabolism; tetrahydrofolate interconversion. Catalyzes the oxidation of 5,10-methylenetetrahydrofolate to 5,10-methenyltetrahydrofolate and then the hydrolysis of 5,10-methenyltetrahydrofolate to 10-formyltetrahydrofolate. In Gloeothece citriformis (strain PCC 7424) (Cyanothece sp. (strain PCC 7424)), this protein is Bifunctional protein FolD.